The sequence spans 408 residues: Histidine--tRNA ligase (408 aa).

This sequence belongs to the class-II aminoacyl-tRNA synthetase family. As to quaternary structure, homodimer.

It is found in the cytoplasm. It catalyses the reaction tRNA(His) + L-histidine + ATP = L-histidyl-tRNA(His) + AMP + diphosphate + H(+). This is Histidine--tRNA ligase from Campylobacter concisus (strain 13826).